We begin with the raw amino-acid sequence, 466 residues long: MSSTGENKNQIKIKFFTNEEDESLQVADTPLYVPVTLKRFGLSEVVNHLLGNFKGEDETKAPIPFDFLIDGVLLRTSIEDYLTKNGLSNEAFLTLEYTRAILPPSFLASFNNDDWISSIDSINPTTKIVMSSQLSISQPKILSGSYDGIVRTYNMSGKVEKQYVGHSAPVKAVKWISPTRIVSAGNDRQVRLWKTSYEEIIDEDEEEIEDGKTLALLEGHKAPVVDLAVDTQTNRILSAGYDQNIGFWSTNYKEMTSIQPLEYDSNVVSSSSKKRRKMAVQDATIRRRAPLSLLQGHSEPVEGVIFDAKDSTVGYSVSQDHTIKTWDLVTSRCVDTRTTGYSLLSVLQLPQVNLIASGSSARHINLHDPRVTTTSDQTISKLVGHTNFVVGLTASPHNQNMFASSSHDGTVKVWDVRAEKSLYTITRQDGSTNAKIFDVCWDDRIGIISGGEDKKLQINKGSDIAK.

Residues 11–99 (IKIKFFTNEE…EAFLTLEYTR (89 aa)) are ubiquitin-like (UBL) domain. The interval 109-466 (SFNNDDWISS…QINKGSDIAK (358 aa)) is sufficient for interaction with ERB1 and association with 66S pre-ribosomes. 7 WD repeats span residues 124–163 (PTTKIVMSSQLSISQPKILSGSYDGIVRTYNMSGKVEKQY), 165–203 (GHSAPVKAVKWISPTRIVSAGNDRQVRLWKTSYEEIIDE), 219–258 (GHKAPVVDLAVDTQTNRILSAGYDQNIGFWSTNYKEMTSI), 296–336 (GHSE…CVDT), 338–377 (TTGYSLLSVLQLPQVNLIASGSSARHINLHDPRVTTTSDQ), 384–424 (GHTN…SLYT), and 431–466 (STNAKIFDVCWDDRIGIISGGEDKKLQINKGSDIAK).

This sequence belongs to the WD repeat WDR12/YTM1 family. In terms of assembly, component of the NOP7 complex, composed of ERB1, NOP7 and YTM1. The complex is held together by ERB1, which interacts with NOP7 via its N-terminal domain and with YTM1 via a high-affinity interaction between the seven-bladed beta-propeller domains of the 2 proteins. The NOP7 complex associates with the 66S pre-ribosome. Interacts (via UBL domain) with MDN1 (via VWFA/MIDAS domain).

It localises to the nucleus. The protein localises to the nucleolus. The protein resides in the nucleoplasm. Component of the NOP7 complex, which is required for maturation of the 25S and 5.8S ribosomal RNAs and formation of the 60S ribosome. This Candida albicans (strain SC5314 / ATCC MYA-2876) (Yeast) protein is Ribosome biogenesis protein YTM1.